The primary structure comprises 697 residues: Elongation factor G (697 aa).

In terms of domain architecture, tr-type G spans 8–282 (EDYRNIGIMA…AVVDYLPSPL (275 aa)). Residues 17–24 (AHIDAGKT), 81–85 (DTPGH), and 135–138 (NKMD) contribute to the GTP site.

The protein belongs to the TRAFAC class translation factor GTPase superfamily. Classic translation factor GTPase family. EF-G/EF-2 subfamily.

The protein resides in the cytoplasm. In terms of biological role, catalyzes the GTP-dependent ribosomal translocation step during translation elongation. During this step, the ribosome changes from the pre-translocational (PRE) to the post-translocational (POST) state as the newly formed A-site-bound peptidyl-tRNA and P-site-bound deacylated tRNA move to the P and E sites, respectively. Catalyzes the coordinated movement of the two tRNA molecules, the mRNA and conformational changes in the ribosome. The sequence is that of Elongation factor G from Mycoplasmopsis agalactiae (strain NCTC 10123 / CIP 59.7 / PG2) (Mycoplasma agalactiae).